We begin with the raw amino-acid sequence, 196 residues long: ATP-dependent Clp protease proteolytic subunit (196 aa).

The Nucleophile role is filled by Ser101. The active site involves His126.

The protein belongs to the peptidase S14 family. Component of the chloroplastic Clp protease core complex.

The protein resides in the plastid. It localises to the chloroplast stroma. It catalyses the reaction Hydrolysis of proteins to small peptides in the presence of ATP and magnesium. alpha-casein is the usual test substrate. In the absence of ATP, only oligopeptides shorter than five residues are hydrolyzed (such as succinyl-Leu-Tyr-|-NHMec, and Leu-Tyr-Leu-|-Tyr-Trp, in which cleavage of the -Tyr-|-Leu- and -Tyr-|-Trp bonds also occurs).. In terms of biological role, cleaves peptides in various proteins in a process that requires ATP hydrolysis. Has a chymotrypsin-like activity. Plays a major role in the degradation of misfolded proteins. This Populus trichocarpa (Western balsam poplar) protein is ATP-dependent Clp protease proteolytic subunit.